Consider the following 454-residue polypeptide: tRNA modification GTPase MnmE (454 aa).

The (6S)-5-formyl-5,6,7,8-tetrahydrofolate site is built by arginine 23, glutamate 80, and lysine 120. In terms of domain architecture, TrmE-type G spans 216 to 377; it reads GMKVVIAGKP…LRTHLKQSMG (162 aa). Position 226 (asparagine 226) interacts with K(+). GTP is bound by residues 226–231, 245–251, 270–273, and 335–338; these read NAGKSS, TAIAGTT, DTAG, and NKAD. Serine 230 serves as a coordination point for Mg(2+). K(+)-binding residues include threonine 245, isoleucine 247, and threonine 250. Threonine 251 serves as a coordination point for Mg(2+). Lysine 454 contributes to the (6S)-5-formyl-5,6,7,8-tetrahydrofolate binding site.

This sequence belongs to the TRAFAC class TrmE-Era-EngA-EngB-Septin-like GTPase superfamily. TrmE GTPase family. As to quaternary structure, homodimer. Heterotetramer of two MnmE and two MnmG subunits. Requires K(+) as cofactor.

The protein resides in the cytoplasm. Its function is as follows. Exhibits a very high intrinsic GTPase hydrolysis rate. Involved in the addition of a carboxymethylaminomethyl (cmnm) group at the wobble position (U34) of certain tRNAs, forming tRNA-cmnm(5)s(2)U34. The chain is tRNA modification GTPase MnmE from Sodalis glossinidius (strain morsitans).